The sequence spans 256 residues: Triosephosphate isomerase (256 aa).

Substrate is bound at residue 9 to 11 (NWK). Catalysis depends on His-97, which acts as the Electrophile. Catalysis depends on Glu-169, which acts as the Proton acceptor. Residues Gly-175, Ser-214, and 235-236 (GG) each bind substrate.

The protein belongs to the triosephosphate isomerase family. Homodimer.

It localises to the cytoplasm. The enzyme catalyses D-glyceraldehyde 3-phosphate = dihydroxyacetone phosphate. It participates in carbohydrate biosynthesis; gluconeogenesis. It functions in the pathway carbohydrate degradation; glycolysis; D-glyceraldehyde 3-phosphate from glycerone phosphate: step 1/1. Involved in the gluconeogenesis. Catalyzes stereospecifically the conversion of dihydroxyacetone phosphate (DHAP) to D-glyceraldehyde-3-phosphate (G3P). This Moritella marina (Vibrio marinus) protein is Triosephosphate isomerase.